The following is a 185-amino-acid chain: Peptidyl-tRNA hydrolase (185 aa).

Y14 provides a ligand contact to tRNA. H19 acts as the Proton acceptor in catalysis. Residues Y64, N66, and N112 each coordinate tRNA.

It belongs to the PTH family. In terms of assembly, monomer.

It is found in the cytoplasm. The catalysed reaction is an N-acyl-L-alpha-aminoacyl-tRNA + H2O = an N-acyl-L-amino acid + a tRNA + H(+). In terms of biological role, hydrolyzes ribosome-free peptidyl-tRNAs (with 1 or more amino acids incorporated), which drop off the ribosome during protein synthesis, or as a result of ribosome stalling. Functionally, catalyzes the release of premature peptidyl moieties from peptidyl-tRNA molecules trapped in stalled 50S ribosomal subunits, and thus maintains levels of free tRNAs and 50S ribosomes. The sequence is that of Peptidyl-tRNA hydrolase from Pediococcus pentosaceus (strain ATCC 25745 / CCUG 21536 / LMG 10740 / 183-1w).